Here is an 836-residue protein sequence, read N- to C-terminus: Phenylalanine--tRNA ligase beta subunit (836 aa).

The tRNA-binding domain maps to 44–160 (PETTGPLVIG…EIAEPGTDAR (117 aa)). One can recognise a B5 domain in the interval 420-495 (PSMPQIRMKT…RLEGLEDIPT (76 aa)). D473, D479, E482, and E483 together coordinate Mg(2+). The FDX-ACB domain occupies 742–835 (SAFPVLHQDL…AAELFGATMR (94 aa)).

It belongs to the phenylalanyl-tRNA synthetase beta subunit family. Type 1 subfamily. As to quaternary structure, tetramer of two alpha and two beta subunits. The cofactor is Mg(2+).

It localises to the cytoplasm. The enzyme catalyses tRNA(Phe) + L-phenylalanine + ATP = L-phenylalanyl-tRNA(Phe) + AMP + diphosphate + H(+). The polypeptide is Phenylalanine--tRNA ligase beta subunit (Corynebacterium diphtheriae (strain ATCC 700971 / NCTC 13129 / Biotype gravis)).